Here is an 89-residue protein sequence, read N- to C-terminus: MSTVQFNEMIALPNSEISQAIIQTEKELFQLQFKKATRQPFKPHEIKKAKRRLAQLKTILTSRLDALEKKRGNTVMKLIKKQNYMTGNF.

The protein belongs to the universal ribosomal protein uL29 family.

Its subcellular location is the plastid. It is found in the chloroplast. The chain is Large ribosomal subunit protein uL29c (rpl29) from Trieres chinensis (Marine centric diatom).